We begin with the raw amino-acid sequence, 197 residues long: MKIIEVDEELYQYIASQTRSIGESASDILRRLLSLPVHTSIVNDLIITSAETDQKPKQAINVKEVNIKTTKKQSITAINQIVEKVQTLLNSTEFQEESKAVVRFLAILRVLYRTNPESFAQATESLQGRTRVYFARDEATLLMAGNHTKPKQIPDTPYWVITNTNSGRKMLMLEGAMQSMELPETLIDEVRSYFTVN.

Interaction with DNA regions lie at residues 100–101, 129–133, and 163–169; these read AV, RTRVY, and NTNSGRK.

Belongs to the SeqA family. In terms of assembly, homodimer. Polymerizes to form helical filaments.

Its subcellular location is the cytoplasm. Its function is as follows. Negative regulator of replication initiation, which contributes to regulation of DNA replication and ensures that replication initiation occurs exactly once per chromosome per cell cycle. Binds to pairs of hemimethylated GATC sequences in the oriC region, thus preventing assembly of replication proteins and re-initiation at newly replicated origins. Repression is relieved when the region becomes fully methylated. This is Negative modulator of initiation of replication from Haemophilus influenzae (strain ATCC 51907 / DSM 11121 / KW20 / Rd).